The chain runs to 388 residues: MKLSPLMALAGLASAQLALALPQATPSASATPSPTPGDGSFASTNGLQFVIDGETGYFAGSNSYWIGFLTNNADVDLVFTHMKEAGLRILRVWGFNDVNEKPADGTVWFQMHADGQSTINTGADGLQRLDYVVQSAEKHGIKLIVNFVNYWDDYGGMNAYVQAYGGSDNTDFYASKDMQAAYRAYIKAVVSRYLDSPAIFAWELANEPRCQGCAPSVLHDWIDSTSQYIKSLDSKHMTCIGDEGFGLDIGSDGSYPYGYSEGGNFTMSLALPTIDFGTFHLYPSSWGTNNDWGNGWVASHGAACKAAGKPCLFEEYGVTSDHCAVEKPWQMTALNTTGIAADLYWQYGDQLSSGQSPNDGNTIYYGTDEFTCLVTDHIASIGSRATRK.

Residues 1–20 (MKLSPLMALAGLASAQLALA) form the signal peptide. Residues Trp93 and Asn206 each coordinate substrate. The active-site Proton donor is the Glu207. A glycan (N-linked (GlcNAc...) asparagine) is linked at Asn264. Substrate is bound at residue Tyr282. The Nucleophile role is filled by Glu315. Asn335 is a glycosylation site (N-linked (GlcNAc...) asparagine). Trp345 is a binding site for substrate.

It belongs to the glycosyl hydrolase 5 (cellulase A) family.

The protein resides in the secreted. It catalyses the reaction Random hydrolysis of (1-&gt;4)-beta-D-mannosidic linkages in mannans, galactomannans and glucomannans.. Its function is as follows. Endo-1,4-mannanase, a crucial enzyme for depolymerization of seed galactomannans and wood galactoglucomannans. The chain is Probable mannan endo-1,4-beta-mannosidase A-1 (manA-1) from Aspergillus terreus (strain NIH 2624 / FGSC A1156).